Consider the following 624-residue polypeptide: Aeromonas extracellular serine protease (624 aa).

An N-terminal signal peptide occupies residues 1–24; it reads MKQTSLALAITALLSTLPSALVQA. Cysteines 28 and 48 form a disulfide. Asparagine 53 provides a ligand contact to Ca(2+). The 363-residue stretch at 59–421 folds into the Peptidase S8 domain; it reads QWYLLNSGQD…GKVRDVKGLE (363 aa). The active-site Charge relay system is the aspartate 102. Position 111 (aspartate 111) interacts with Ca(2+). Positions 116 to 140 are disordered; sequence VRPGSKNVVTGSDDPTPTDPDTAHG. Catalysis depends on histidine 139, which acts as the Charge relay system. 10 residues coordinate Ca(2+): valine 150, asparagine 152, isoleucine 154, threonine 156, aspartate 321, leucine 322, glycine 324, methionine 327, asparagine 330, and cysteine 350. Cysteine 325 and cysteine 350 are disulfide-bonded. Serine 360 serves as the catalytic Charge relay system. Positions 456–622 constitute a P/Homo B domain; the sequence is LPPLVQLPWQ…SLRVLGHDAN (167 aa). The Ca(2+) site is built by aspartate 478, aspartate 512, aspartate 577, alanine 579, asparagine 602, and asparagine 603.

This sequence belongs to the peptidase S8 family. Furin subfamily. As to quaternary structure, forms a complex with the chaperone ORF2 in the periplasm. After translocation of the ASP-ORF2 complex from the periplasm to the extracellular space, the complex is dissociated in a pH-dependent manner. Ca(2+) is required as a cofactor.

The protein localises to the periplasm. It localises to the secreted. It carries out the reaction Cleavage of -Lys-Lys-|-Xaa and -Lys-Arg-|-Xaa bonds.. With respect to regulation, folding, maturation and production of the active form of the protease by the cell requires a protein (ORF2), encoded just downstream of asp, which acts as a chaperone. Formation of a complex with ORF2 in the periplasm also inactivates the protease activity and likely protects ASP from intrinsic proteases. In vitro, protease activity is inhibited by human alpha-2-macroglobulin, suggesting that this inhibitor can impede ASP virulence activities in A.sobria infection sites. However, slow ASP inhibition by alpha-2-macroglobulin in plasma may indicate insufficient ASP control in vivo. Activity is inhibited by serine protease inhibitors such as 4-(2-aminoethyl)-benzenesulfonyl fluoride (AEBSF) and diisopropyl fluorophosphate (DFP). Not inhibited by metallo-protease inhibitors and cysteine protease inhibitors. The treatment with reagents to modify sulfhydryl group do not reduce the activity. Functionally, exhibits serine protease activity. Preferentially cleaves the peptide bond following two basic residues, one of which is Lys, but does not recognize the bond following a single basic residue. Probable potent virulence factor that cleaves various host plasma proteins, including prekallikrein, prothrombin and fibrinogen. ASP induces vascular leakage and reduction in blood pressure by activating the host plasma kallikrein/kinin system. It affects the host coagulation system during infection through activation of prothrombin to alpha-thrombin and degradation of fibrinogen, which impairs plasma clottability. It also hydrolyzes the complement component C5, releasing the C5a anaphylatoxin, which causes the formation of pus and edema. In addition, degrades its external chaperone ORF2 after the secretion of the ASP-ORF2 complex. In Aeromonas sobria, this protein is Aeromonas extracellular serine protease.